The following is a 125-amino-acid chain: Fluoride-specific ion channel FluC (125 aa).

The next 4 membrane-spanning stretches (helical) occupy residues 4 to 24 (VIYV…VGIV), 32 to 52 (FLPW…GLFA), 68 to 88 (LLIT…LDTV), and 100 to 120 (AFYV…GLAV). 2 residues coordinate Na(+): glycine 75 and threonine 78.

It belongs to the fluoride channel Fluc/FEX (TC 1.A.43) family.

Its subcellular location is the cell inner membrane. The catalysed reaction is fluoride(in) = fluoride(out). With respect to regulation, na(+) is not transported, but it plays an essential structural role and its presence is essential for fluoride channel function. Functionally, fluoride-specific ion channel. Important for reducing fluoride concentration in the cell, thus reducing its toxicity. In Allorhizobium ampelinum (strain ATCC BAA-846 / DSM 112012 / S4) (Agrobacterium vitis (strain S4)), this protein is Fluoride-specific ion channel FluC.